The sequence spans 135 residues: Interleukin-4 (135 aa).

A signal peptide spans 1–24 (MGLTSQLIPVLVCLLVCTSHFVHG). 3 disulfides stabilise this stretch: Cys-27-Cys-135, Cys-48-Cys-85, and Cys-70-Cys-105. Asn-62 carries N-linked (GlcNAc...) asparagine glycosylation.

It belongs to the IL-4/IL-13 family.

Its subcellular location is the secreted. Participates in at least several B-cell activation processes as well as of other cell types. It is a costimulator of DNA-synthesis. It induces the expression of class II MHC molecules on resting B-cells. It enhances both secretion and cell surface expression of IgE and IgG1. It also regulates the expression of the low affinity Fc receptor for IgE (CD23) on both lymphocytes and monocytes. Positively regulates IL31RA expression in macrophages. Stimulates autophagy in dendritic cells by interfering with mTORC1 signaling and through the induction of RUFY4. This Bos taurus (Bovine) protein is Interleukin-4 (IL4).